Reading from the N-terminus, the 751-residue chain is Catalase-peroxidase (751 aa).

Residues 92–240 constitute a cross-link (tryptophyl-tyrosyl-methioninium (Trp-Tyr) (with M-266)); that stretch reads WHSAGTYRVT…VAAAHMGLIY (149 aa). Residue H93 is the Proton acceptor of the active site. Residues 240–266 constitute a cross-link (tryptophyl-tyrosyl-methioninium (Tyr-Met) (with W-92)); the sequence is YVNPEGPDGVPDPIAAARDIRTTFHRM. Heme b is bound at residue H281.

This sequence belongs to the peroxidase family. Peroxidase/catalase subfamily. In terms of assembly, homodimer or homotetramer. Requires heme b as cofactor. In terms of processing, formation of the three residue Trp-Tyr-Met cross-link is important for the catalase, but not the peroxidase activity of the enzyme.

The protein resides in the cytoplasm. It carries out the reaction H2O2 + AH2 = A + 2 H2O. The catalysed reaction is 2 H2O2 = O2 + 2 H2O. In terms of biological role, bifunctional enzyme with both catalase and broad-spectrum peroxidase activity. In Phaeosphaeria nodorum (strain SN15 / ATCC MYA-4574 / FGSC 10173) (Glume blotch fungus), this protein is Catalase-peroxidase.